The chain runs to 254 residues: Pimeloyl-[acyl-carrier protein] methyl ester esterase (254 aa).

The region spanning 14–238 (VVMLHGWGLH…QASHAPFLSH (225 aa)) is the AB hydrolase-1 domain. Substrate-binding positions include Trp20, 80–81 (SL), and 142–146 (FLALQ). The active-site Nucleophile is Ser80. Residues Asp204 and His232 contribute to the active site. Residue His232 participates in substrate binding.

It belongs to the AB hydrolase superfamily. Carboxylesterase BioH family. As to quaternary structure, monomer.

It is found in the cytoplasm. The enzyme catalyses 6-carboxyhexanoyl-[ACP] methyl ester + H2O = 6-carboxyhexanoyl-[ACP] + methanol + H(+). The protein operates within cofactor biosynthesis; biotin biosynthesis. The physiological role of BioH is to remove the methyl group introduced by BioC when the pimeloyl moiety is complete. It allows to synthesize pimeloyl-ACP via the fatty acid synthetic pathway through the hydrolysis of the ester bonds of pimeloyl-ACP esters. The polypeptide is Pimeloyl-[acyl-carrier protein] methyl ester esterase (Chromobacterium violaceum (strain ATCC 12472 / DSM 30191 / JCM 1249 / CCUG 213 / NBRC 12614 / NCIMB 9131 / NCTC 9757 / MK)).